A 266-amino-acid polypeptide reads, in one-letter code: 4-hydroxy-tetrahydrodipicolinate reductase (266 aa).

10–15 contacts NAD(+); that stretch reads GPRGRM. NADP(+) is bound at residue Lys-38. Residues 99–101 and 125–128 contribute to the NAD(+) site; these read GTT and APNF. The active-site Proton donor/acceptor is His-155. His-156 lines the (S)-2,3,4,5-tetrahydrodipicolinate pocket. Lys-159 (proton donor) is an active-site residue. 165–166 is a binding site for (S)-2,3,4,5-tetrahydrodipicolinate; that stretch reads GT.

It belongs to the DapB family.

The protein localises to the cytoplasm. The catalysed reaction is (S)-2,3,4,5-tetrahydrodipicolinate + NAD(+) + H2O = (2S,4S)-4-hydroxy-2,3,4,5-tetrahydrodipicolinate + NADH + H(+). It catalyses the reaction (S)-2,3,4,5-tetrahydrodipicolinate + NADP(+) + H2O = (2S,4S)-4-hydroxy-2,3,4,5-tetrahydrodipicolinate + NADPH + H(+). It functions in the pathway amino-acid biosynthesis; L-lysine biosynthesis via DAP pathway; (S)-tetrahydrodipicolinate from L-aspartate: step 4/4. In terms of biological role, catalyzes the conversion of 4-hydroxy-tetrahydrodipicolinate (HTPA) to tetrahydrodipicolinate. This is 4-hydroxy-tetrahydrodipicolinate reductase from Bacillus cereus (strain Q1).